Consider the following 306-residue polypeptide: UDP-3-O-acyl-N-acetylglucosamine deacetylase (306 aa).

Positions 79, 238, and 242 each coordinate Zn(2+). Catalysis depends on His-265, which acts as the Proton donor.

It belongs to the LpxC family. The cofactor is Zn(2+).

It carries out the reaction a UDP-3-O-[(3R)-3-hydroxyacyl]-N-acetyl-alpha-D-glucosamine + H2O = a UDP-3-O-[(3R)-3-hydroxyacyl]-alpha-D-glucosamine + acetate. The protein operates within glycolipid biosynthesis; lipid IV(A) biosynthesis; lipid IV(A) from (3R)-3-hydroxytetradecanoyl-[acyl-carrier-protein] and UDP-N-acetyl-alpha-D-glucosamine: step 2/6. Functionally, catalyzes the hydrolysis of UDP-3-O-myristoyl-N-acetylglucosamine to form UDP-3-O-myristoylglucosamine and acetate, the committed step in lipid A biosynthesis. The chain is UDP-3-O-acyl-N-acetylglucosamine deacetylase from Idiomarina loihiensis (strain ATCC BAA-735 / DSM 15497 / L2-TR).